The chain runs to 321 residues: Glucokinase (321 aa).

8–13 (GDVGGT) provides a ligand contact to ATP.

This sequence belongs to the bacterial glucokinase family.

Its subcellular location is the cytoplasm. It catalyses the reaction D-glucose + ATP = D-glucose 6-phosphate + ADP + H(+). The sequence is that of Glucokinase from Cronobacter sakazakii (strain ATCC BAA-894) (Enterobacter sakazakii).